A 25-amino-acid chain; its full sequence is U11-ctenitoxin-Co1b (25 aa).

Cystine bridges form between C4–C18 and C11–C22.

Monomer. Expressed by the venom gland.

It localises to the secreted. In terms of biological role, neurotoxin. In Ctenus ornatus (Brazilian spider), this protein is U11-ctenitoxin-Co1b.